Reading from the N-terminus, the 183-residue chain is ATP-dependent protease subunit HslV (183 aa).

The active site involves threonine 13. Na(+)-binding residues include glycine 168, cysteine 171, and threonine 174.

It belongs to the peptidase T1B family. HslV subfamily. As to quaternary structure, a double ring-shaped homohexamer of HslV is capped on each side by a ring-shaped HslU homohexamer. The assembly of the HslU/HslV complex is dependent on binding of ATP.

It is found in the cytoplasm. It carries out the reaction ATP-dependent cleavage of peptide bonds with broad specificity.. Allosterically activated by HslU binding. In terms of biological role, protease subunit of a proteasome-like degradation complex believed to be a general protein degrading machinery. This Xanthomonas campestris pv. campestris (strain ATCC 33913 / DSM 3586 / NCPPB 528 / LMG 568 / P 25) protein is ATP-dependent protease subunit HslV.